We begin with the raw amino-acid sequence, 190 residues long: Peptidyl-tRNA hydrolase (190 aa).

Tyr14 serves as a coordination point for tRNA. His19 acts as the Proton acceptor in catalysis. TRNA is bound by residues Tyr64, Asn66, and Asn112.

This sequence belongs to the PTH family. As to quaternary structure, monomer.

It is found in the cytoplasm. The enzyme catalyses an N-acyl-L-alpha-aminoacyl-tRNA + H2O = an N-acyl-L-amino acid + a tRNA + H(+). Functionally, hydrolyzes ribosome-free peptidyl-tRNAs (with 1 or more amino acids incorporated), which drop off the ribosome during protein synthesis, or as a result of ribosome stalling. Catalyzes the release of premature peptidyl moieties from peptidyl-tRNA molecules trapped in stalled 50S ribosomal subunits, and thus maintains levels of free tRNAs and 50S ribosomes. The chain is Peptidyl-tRNA hydrolase from Chlorobium luteolum (strain DSM 273 / BCRC 81028 / 2530) (Pelodictyon luteolum).